A 245-amino-acid chain; its full sequence is 8-amino-3,8-dideoxy-manno-octulosonate cytidylyltransferase (245 aa).

Belongs to the KdsB family.

Its subcellular location is the cytoplasm. The enzyme catalyses 8-amino-3,8-dideoxy-alpha-D-manno-octulosonate + CTP = CMP-8-amino-3,8-dideoxy-alpha-D-manno-oct-2-ulosonate + diphosphate. The protein operates within bacterial outer membrane biogenesis; lipopolysaccharide biosynthesis. In terms of biological role, activates KDO8N (a required 8-carbon sugar) for incorporation into bacterial lipopolysaccharide in the Shewanella genus. This chain is 8-amino-3,8-dideoxy-manno-octulosonate cytidylyltransferase, found in Shewanella woodyi (strain ATCC 51908 / MS32).